Consider the following 276-residue polypeptide: Undecaprenyl-diphosphatase (276 aa).

8 consecutive transmembrane segments (helical) span residues 1 to 21 (MSWL…FLPV), 39 to 59 (AGAS…LVYF), 84 to 104 (YRLG…GLLL), 115 to 135 (LWAI…AEYF), 159 to 179 (LALL…LFLG), 190 to 210 (FLLA…DAFA), 222 to 242 (QLLV…AWFL), and 253 to 273 (FVGY…TGVV).

Belongs to the UppP family.

The protein localises to the cell membrane. It catalyses the reaction di-trans,octa-cis-undecaprenyl diphosphate + H2O = di-trans,octa-cis-undecaprenyl phosphate + phosphate + H(+). In terms of biological role, catalyzes the dephosphorylation of undecaprenyl diphosphate (UPP). Confers resistance to bacitracin. The polypeptide is Undecaprenyl-diphosphatase (Mycobacterium sp. (strain KMS)).